The primary structure comprises 268 residues: M1-specific T cell receptor alpha chain (268 aa).

A signal peptide spans 1 to 19 (MVLKFSVSILWIQLAWVST). Residues 20-107 (QLLEQSPQFL…QPGDTGLYLC (88 aa)) enclose the Ig-like V-type domain. A t cell receptor alpha variable 27 region spans residues 20-109 (QLLEQSPQFL…GDTGLYLCAG (90 aa)). N-linked (GlcNAc...) asparagine glycosylation is found at Asn36 and Asn42. Cys41 and Cys107 form a disulfide bridge. Residues 45–49 (SVFSS) form a CDR1 region. Residues 67-69 (VVT) are CDR2. The tract at residues 107–118 (CAGGGSQGNLIF) is CDR3. The segment at 110–128 (GGSQGNLIFGKGTKLSVKP) is t cell receptor alpha joining 42. A t cell receptor alpha constant region spans residues 129 to 268 (IQNPDPAVYQ…LLMTLRLWSS (140 aa)). An Ig-like C1-type domain is found at 147–235 (KSVCLFTDFD…LVEKSFETDT (89 aa)). Cys150 and Cys200 form a disulfide bridge. 4 N-linked (GlcNAc...) asparagine glycosylation sites follow: Asn160, Asn194, Asn205, and Asn241. Residues 222 to 243 (CDVKLVEKSFETDTNLNFQNLS) are connecting peptide. The helical transmembrane segment at 244–266 (VIGFRILLLKVAGFNLLMTLRLW) threads the bilayer. The Cytoplasmic segment spans residues 267 to 268 (SS).

In terms of assembly, disulfide-linked heterodimer with TRBV19*01J2S7*01C*02 beta chain. The TR primarily interacts via its CDR3-beta domain with M/matrix protein 1-derived peptide (GILGFVFTL) displayed by HLA-A*02.01 in a 'peg-notch' recognition mode. The alpha-beta TR associates with the transmembrane signaling CD3 coreceptor proteins to form the TR-CD3 (TCR). The assembly of alpha-beta TR heterodimers with CD3 occurs in the endoplasmic reticulum where a single alpha-beta TR heterodimer associates with one CD3D-CD3E heterodimer, one CD3G-CD3E heterodimer and one CD247 homodimer forming a stable octameric structure. CD3D-CD3E and CD3G-CD3E heterodimers preferentially associate with TR alpha and TR beta chains (via TM domain), respectively. The association of the CD247 homodimer is the last step of TCR assembly in the endoplasmic reticulum and is required for transport to the cell surface. Expressed in M/matrix protein 1-specific effector and memory CD8-positive T cells readily detectable in the peripheral blood, secondary lymphoid organs and lung (primary site of infection) of IAV infected individuals.

Its subcellular location is the cell membrane. Its function is as follows. The alpha chain of TRAV27*01J42*01C*01/TRBV19*01J2S7*01C*02 alpha-beta T cell receptor (TR) clonotype that is specific for HLA-A*02:01-restricted M/matrix protein 1 immunodominant epitope GILGFVFTL of influenza A virus (IAV). Classified as a public TR clonotype, it is preferentially selected in effector memory CD8-positive T cells among multiple HLA-A*02:01 carriers and confers long-lived immunity against IAV infection. Can cross-recognize sporadically emerging IAV variants by molecular mimicry, inducing immunity toward different influenza strains. Antigen recognition initiates TR-CD3 clustering on the cell surface and intracellular activation of LCK that phosphorylates the ITAM motifs of CD3G, CD3D, CD3E and CD247 enabling the recruitment of ZAP70. In turn, ZAP70 phosphorylates LAT, which recruits numerous signaling molecules to form the LAT signalosome. The LAT signalosome propagates signal branching to three major signaling pathways, the calcium, the mitogen-activated protein kinase (MAPK) kinase and the nuclear factor NF-kappa-B (NF-kB) pathways, leading to the mobilization of transcription factors that are critical for gene expression and essential for T cell differentiation into effector/memory T cells. In Homo sapiens (Human), this protein is M1-specific T cell receptor alpha chain.